The chain runs to 574 residues: Septation ring formation regulator EzrA (574 aa).

At 1 to 7 (MSSGIIL) the chain is on the extracellular side. Residues 8–26 (LIVAIVLLVIIAYLVGVII) traverse the membrane as a helical segment. At 27–574 (RKRNDSLITS…YEKTREHIRF (548 aa)) the chain is on the cytoplasmic side. Coiled coils occupy residues 102–141 (NFIRAKHEINSVESQLNLVEEDIASIREALNILKEQEEKN), 274–350 (ELVT…ETES), and 459–520 (QLEA…SFEA).

It belongs to the EzrA family.

It localises to the cell membrane. Its function is as follows. Negative regulator of FtsZ ring formation; modulates the frequency and position of FtsZ ring formation. Inhibits FtsZ ring formation at polar sites. Interacts either with FtsZ or with one of its binding partners to promote depolymerization. In Streptococcus pyogenes serotype M6 (strain ATCC BAA-946 / MGAS10394), this protein is Septation ring formation regulator EzrA.